Here is a 336-residue protein sequence, read N- to C-terminus: MASRSQNRRPAQEVDNTISYVQCDGLAAMKMVKHCHEESLSNMEVAQGALLGLVVDDRLEITNCFPFPKSSDETIDEEEYQLNMMRRLRLVNVDHFHVGWYQSADVGNFLSLPLLESQYHYQTSIEESVVVIYDTQKSKRGFLTLKAYRLTPQAIAMYKEGEFTPEALRNLKVGYENLFLEVPIVIKNSALCNIMMSELAEMVPEEEGTHFLDLGTASVLENHLRSMMDRVDELNQEANKFNKYQQTVIRQEQDKHRMLAKHAQENAARIAKGETAIPDDEITKLFRPPTVPPRLNPLIVSGQINTYAKHISQFCSQSLAKLYMTQALQGAKENKQ.

An MPN domain is found at 21–154 (VQCDGLAAMK…LKAYRLTPQA (134 aa)).

Belongs to the eIF-3 subunit H family. As to quaternary structure, component of the eukaryotic translation initiation factor 3 (eIF-3) complex.

The protein resides in the cytoplasm. Functionally, component of the eukaryotic translation initiation factor 3 (eIF-3) complex, which is involved in protein synthesis of a specialized repertoire of mRNAs and, together with other initiation factors, stimulates binding of mRNA and methionyl-tRNAi to the 40S ribosome. The eIF-3 complex specifically targets and initiates translation of a subset of mRNAs involved in cell proliferation. This Culex quinquefasciatus (Southern house mosquito) protein is Eukaryotic translation initiation factor 3 subunit H.